The sequence spans 199 residues: GTP cyclohydrolase-2 (199 aa).

GTP is bound at residue 50–54 (RIHSE). Zn(2+)-binding residues include C55, C66, and C68. GTP contacts are provided by residues Q71, 93-95 (EGR), and T115. Catalysis depends on D127, which acts as the Proton acceptor. Catalysis depends on R129, which acts as the Nucleophile. T150 and K155 together coordinate GTP.

The protein belongs to the GTP cyclohydrolase II family. In terms of assembly, homodimer. Requires Zn(2+) as cofactor.

The enzyme catalyses GTP + 4 H2O = 2,5-diamino-6-hydroxy-4-(5-phosphoribosylamino)-pyrimidine + formate + 2 phosphate + 3 H(+). Its pathway is cofactor biosynthesis; riboflavin biosynthesis; 5-amino-6-(D-ribitylamino)uracil from GTP: step 1/4. Catalyzes the conversion of GTP to 2,5-diamino-6-ribosylamino-4(3H)-pyrimidinone 5'-phosphate (DARP), formate and pyrophosphate. This is GTP cyclohydrolase-2 from Buchnera aphidicola subsp. Baizongia pistaciae (strain Bp).